Reading from the N-terminus, the 863-residue chain is DNA mismatch repair protein MutS 2 (863 aa).

ATP is bound at residue 626–633; it reads GPNMSGKS.

This sequence belongs to the DNA mismatch repair MutS family.

In terms of biological role, this protein is involved in the repair of mismatches in DNA. It is possible that it carries out the mismatch recognition step. This protein has a weak ATPase activity. In Halobacterium salinarum (strain ATCC 700922 / JCM 11081 / NRC-1) (Halobacterium halobium), this protein is DNA mismatch repair protein MutS 2 (mutS2).